A 67-amino-acid polypeptide reads, in one-letter code: V-type proton ATPase subunit e (67 aa).

Residues 1-2 lie on the Lumenal side of the membrane; it reads MG. Residues 3–23 form a helical membrane-spanning segment; it reads GLVVLLVGLLTALMSVVSYYV. The Cytoplasmic portion of the chain corresponds to 24–35; the sequence is SPKGNNTSTWQM. A helical transmembrane segment spans residues 36 to 56; the sequence is SLILTFSCCYLLWAITYLAQL. Over 57 to 67 the chain is Lumenal; sequence HPLEAPSRVLE.

It belongs to the V-ATPase e1/e2 subunit family. V-ATPase is a heteromultimeric enzyme composed of a peripheral catalytic V1 complex (components A to H) attached to an integral membrane V0 proton pore complex (components: a, c, c', c'', d, e, f and VOA1).

The protein localises to the vacuole membrane. In terms of biological role, subunit of the V0 complex of vacuolar(H+)-ATPase (V-ATPase), a multisubunit enzyme composed of a peripheral complex (V1) that hydrolyzes ATP and a membrane integral complex (V0) that translocates protons. V-ATPase is responsible for acidifying and maintaining the pH of intracellular compartments. This is V-type proton ATPase subunit e (vma9) from Schizosaccharomyces pombe (strain 972 / ATCC 24843) (Fission yeast).